Consider the following 310-residue polypeptide: Protein FAM153A (310 aa).

4 disordered regions span residues 39-58, 108-136, 156-184, and 250-297; these read LGVP…LCPP, QTNG…HTME, SYNG…DLEE, and TITG…KKSR. Residues 259 to 268 are compositionally biased toward low complexity; the sequence is SASPSSAPAE. Basic and acidic residues predominate over residues 270 to 282; the sequence is ATEKTKVEEEVKT. Positions 283–297 are enriched in basic residues; that stretch reads RKPKKKTRKPSKKSR.

It belongs to the FAM153 family.

The sequence is that of Protein FAM153A (FAM153A) from Homo sapiens (Human).